Consider the following 285-residue polypeptide: Pantothenate synthetase (285 aa).

Residue 30 to 37 coordinates ATP; it reads MGYLHAGH. His37 acts as the Proton donor in catalysis. A (R)-pantoate-binding site is contributed by Gln61. Residue Gln61 coordinates beta-alanine. An ATP-binding site is contributed by 147–150; the sequence is GQKD. Gln153 contributes to the (R)-pantoate binding site. ATP contacts are provided by residues Val176 and 184 to 187; that span reads LSSR.

Belongs to the pantothenate synthetase family. Homodimer.

The protein resides in the cytoplasm. It carries out the reaction (R)-pantoate + beta-alanine + ATP = (R)-pantothenate + AMP + diphosphate + H(+). The protein operates within cofactor biosynthesis; (R)-pantothenate biosynthesis; (R)-pantothenate from (R)-pantoate and beta-alanine: step 1/1. Its function is as follows. Catalyzes the condensation of pantoate with beta-alanine in an ATP-dependent reaction via a pantoyl-adenylate intermediate. This chain is Pantothenate synthetase, found in Solidesulfovibrio magneticus (strain ATCC 700980 / DSM 13731 / RS-1) (Desulfovibrio magneticus).